A 271-amino-acid polypeptide reads, in one-letter code: Probable septum site-determining protein MinC (271 aa).

The interval 106–125 is disordered; the sequence is RRAPSPKAADDAPAQPEEPR. Residues 110–119 show a composition bias toward low complexity; it reads SPKAADDAPA.

The protein belongs to the MinC family. Interacts with MinD and FtsZ.

Functionally, cell division inhibitor that blocks the formation of polar Z ring septums. Rapidly oscillates between the poles of the cell to destabilize FtsZ filaments that have formed before they mature into polar Z rings. Prevents FtsZ polymerization. In Burkholderia thailandensis (strain ATCC 700388 / DSM 13276 / CCUG 48851 / CIP 106301 / E264), this protein is Probable septum site-determining protein MinC.